Reading from the N-terminus, the 398-residue chain is Phosphoglycerate kinase (398 aa).

Substrate contacts are provided by residues 21-23 (DFN), arginine 36, 59-62 (HLGR), arginine 119, and arginine 157. ATP contacts are provided by residues lysine 208, glycine 296, glutamate 327, and 354–357 (GGDS).

Belongs to the phosphoglycerate kinase family. As to quaternary structure, monomer.

Its subcellular location is the cytoplasm. The enzyme catalyses (2R)-3-phosphoglycerate + ATP = (2R)-3-phospho-glyceroyl phosphate + ADP. It functions in the pathway carbohydrate degradation; glycolysis; pyruvate from D-glyceraldehyde 3-phosphate: step 2/5. This chain is Phosphoglycerate kinase, found in Streptococcus equi subsp. equi (strain 4047).